The following is a 196-amino-acid chain: MVNIIWVSLTVIGLVFAMCNGTLQDVNEAVFKGAKEAITISFGLMSVLVFWLGLMKIAEQSGLLDIFSRMCRPFISKLFPDIPPDHPAMGYILSNLMANFFGLGNAATPLGIKAMEQMKKLNGNRSEASRSMITFLAVNTSCITLIPTTVIAVRMAYSSKTPTDIVGPSILATLISGIGAIIIDRYFYYRRKKKGR.

4 helical membrane passes run 1 to 21 (MVNI…MCNG), 37 to 57 (AITI…LMKI), 133 to 153 (ITFL…VIAV), and 163 to 183 (TDIV…AIII).

Its subcellular location is the cell membrane. Its function is as follows. Involved in spore core dehydration; might be involved in the transport of something into or out of the forespore or could be required for some modification of the cortex peptidoglycan structure. The polypeptide is Spore maturation protein A (spmA) (Bacillus subtilis (strain 168)).